We begin with the raw amino-acid sequence, 348 residues long: Dihydroorotase (348 aa).

Residues H17 and H19 each coordinate Zn(2+). Substrate contacts are provided by residues 19–21 (HLR) and N45. Positions 103, 140, and 178 each coordinate Zn(2+). Residue K103 is modified to N6-carboxylysine. A substrate-binding site is contributed by H140. Substrate is bound at residue L223. Zn(2+) is bound at residue D251. Residue D251 is part of the active site. Positions 255 and 267 each coordinate substrate.

Belongs to the metallo-dependent hydrolases superfamily. DHOase family. Class II DHOase subfamily. Homodimer. Requires Zn(2+) as cofactor.

It catalyses the reaction (S)-dihydroorotate + H2O = N-carbamoyl-L-aspartate + H(+). The protein operates within pyrimidine metabolism; UMP biosynthesis via de novo pathway; (S)-dihydroorotate from bicarbonate: step 3/3. Functionally, catalyzes the reversible cyclization of carbamoyl aspartate to dihydroorotate. This chain is Dihydroorotase, found in Klebsiella pneumoniae (strain 342).